A 315-amino-acid polypeptide reads, in one-letter code: Olfactory receptor 10H2 (315 aa).

Residues 1-25 (MLGLNHTSMSEFILVGFSAFPHLQL) lie on the Extracellular side of the membrane. Asn-5 carries an N-linked (GlcNAc...) asparagine glycan. A helical transmembrane segment spans residues 26-46 (MLFLLFLLMYLFTLLGNLLIM). Residues 47–54 (ATVWSERS) are Cytoplasmic-facing. The chain crosses the membrane as a helical span at residues 55-75 (LHTPMYLFLCVLSVSEILYTV). At 76 to 99 (AIIPRMLADLLSTQRSIAFLACAS) the chain is on the extracellular side. Cys-97 and Cys-189 are oxidised to a cystine. Residues 100–120 (QMFFSFSFGFTHSFLLTVMGY) form a helical membrane-spanning segment. Over 121 to 139 (DRYVAICHPLRYNVLMSPR) the chain is Cytoplasmic. Residues 140–160 (GCACLVGCSWAGGSVMGMVVT) traverse the membrane as a helical segment. The Extracellular portion of the chain corresponds to 161 to 197 (SAIFQLTFCGSHEIQHFLCHVPPLLKLACGNNVPAVA). A helical membrane pass occupies residues 198–218 (LGVGLVCIMALLGCFLLILLS). At 219–238 (YAFIVADILKIPSAEGRNKA) the chain is on the cytoplasmic side. Residues 239-259 (FSTCASHLIVVIVHYGFASVI) traverse the membrane as a helical segment. Over 260-272 (YLKPKGPHSQEGD) the chain is Extracellular. The helical transmembrane segment at 273–293 (TLMATTYAVLTPFLSPIIFSL) threads the bilayer. The Cytoplasmic segment spans residues 294-315 (RNKELKVAMKRTFLSTLYSSGT).

Belongs to the G-protein coupled receptor 1 family.

The protein resides in the cell membrane. Functionally, odorant receptor. The polypeptide is Olfactory receptor 10H2 (OR10H2) (Homo sapiens (Human)).